The primary structure comprises 606 residues: Mannan endo-1,4-beta-mannosidase A (606 aa).

The signal sequence occupies residues 1–19; sequence MKSLNVILTLLSLIISVLS. In terms of domain architecture, CBM6 spans 22–140; sequence VYYEAEDGKL…WMWVDAFVIN (119 aa). The GH26 domain maps to 164–458; it reads PAAKKLYDFL…FNHKTVMNMD (295 aa). Position 285 (W285) interacts with substrate. E318 acts as the Proton donor in catalysis. Positions 323 and 378 each coordinate substrate. E406 serves as the catalytic Nucleophile. Residues 472–489 are linker; sequence SGSSHNGNSESNSNTGNS. 3 CBM10 domains span residues 491-527, 530-566, and 569-605; these read ECWSINLGYPCCIGDYVVTTDENGDWGVENNEWCGIV, SCWSEPLGYPCCVGNTVISADESGDWGVENNEWCGIV, and SCWAEFLGYPCCVGNTVISTDEFGDWGVENDDWCGIL. W493 serves as a coordination point for substrate.

This sequence belongs to the glycosyl hydrolase 26 family.

The catalysed reaction is Random hydrolysis of (1-&gt;4)-beta-D-mannosidic linkages in mannans, galactomannans and glucomannans.. Hydrolyzes 1,4-beta linked polysaccharide backbones of mannans, one of the major hemicellulose components in hardwoods and softwoods. Shows very high activity against mannohexaose but not against mannopentaose and smaller mannooligosaccharides. The major products released from mannooligosaccharide hydrolysis are mannose and mannobiose. The reiterated 40 AA domain is involved in binding the cellulase-hemicellulase complex. This chain is Mannan endo-1,4-beta-mannosidase A (MANA), found in Piromyces sp.